The primary structure comprises 123 residues: Glucose starvation-inducible protein B (123 aa).

Basic and acidic residues-rich tracts occupy residues 1-29 (MADN…KEFY) and 41-109 (SKNH…KEFY). Residues 1–123 (MADNNKMSRE…SKGGNARNND (123 aa)) form a disordered region. 5 tandem repeats follow at residues 13 to 32 (GRKG…YQEI), 33 to 52 (GQKG…YQEI), 53 to 72 (GEKG…YQEI), 73 to 92 (GEKG…YQEI), and 93 to 112 (GRKG…YQEI). The interval 13–120 (GRKGGETTSK…EIGSKGGNAR (108 aa)) is 5 X 20 AA approximate tandem repeats.

Functionally, involved in an adaptive response to nutrient deprivation other than sporulation. This is Glucose starvation-inducible protein B (gsiB) from Bacillus subtilis (strain 168).